Here is a 1286-residue protein sequence, read N- to C-terminus: Galactose/N-acetyl-D-galactosamine lectin heavy subunit 2 (1286 aa).

Residues 1-15 (MKLLLLNILLLCCLA) form the signal peptide. At 16 to 1227 (DKLNEFSADI…NNVGAIAAAT (1212 aa)) the chain is on the extracellular side. N-linked (GlcNAc...) asparagine glycosylation is found at asparagine 200, asparagine 331, asparagine 384, asparagine 462, asparagine 652, asparagine 883, asparagine 1197, and asparagine 1207. Residues 1228-1248 (TVAVVVVAVVVALIVVSIGLF) form a helical membrane-spanning segment. At 1249–1286 (KTYQLVSSAMKNAITTTNENAEYVGADNEATNAATYNG) the chain is on the cytoplasmic side.

In terms of assembly, heterodimer composed of a 170 kDa heavy subunit (hgl) and a 31/35 kDa light subunit (lgl); disulfide-linked. In terms of processing, N-glycosylated.

It is found in the cell membrane. Its function is as follows. Lectin which binds galactose and N-acetyl-D-galactosamine of host glycoproteins and thus mediates adhesion to host cells. Mediates adherence to host colonic mucins, an essential step for pathogenic tissue invasion. The sequence is that of Galactose/N-acetyl-D-galactosamine lectin heavy subunit 2 from Entamoeba histolytica (strain ATCC 30459 / HM-1:IMSS / ABRM).